The following is a 383-amino-acid chain: 1-deoxy-D-xylulose 5-phosphate reductoisomerase (383 aa).

Positions 10, 11, 12, 13, 38, and 121 each coordinate NADPH. Lys-122 lines the 1-deoxy-D-xylulose 5-phosphate pocket. Residue Glu-123 coordinates NADPH. A Mn(2+)-binding site is contributed by Asp-147. Positions 148, 149, 172, and 195 each coordinate 1-deoxy-D-xylulose 5-phosphate. Glu-149 lines the Mn(2+) pocket. An NADPH-binding site is contributed by Gly-201. The 1-deoxy-D-xylulose 5-phosphate site is built by Ser-208, Asn-213, Lys-214, and Glu-217. Glu-217 contacts Mn(2+).

The protein belongs to the DXR family. Mg(2+) serves as cofactor. The cofactor is Mn(2+).

The enzyme catalyses 2-C-methyl-D-erythritol 4-phosphate + NADP(+) = 1-deoxy-D-xylulose 5-phosphate + NADPH + H(+). Its pathway is isoprenoid biosynthesis; isopentenyl diphosphate biosynthesis via DXP pathway; isopentenyl diphosphate from 1-deoxy-D-xylulose 5-phosphate: step 1/6. In terms of biological role, catalyzes the NADPH-dependent rearrangement and reduction of 1-deoxy-D-xylulose-5-phosphate (DXP) to 2-C-methyl-D-erythritol 4-phosphate (MEP). This is 1-deoxy-D-xylulose 5-phosphate reductoisomerase from Vesicomyosocius okutanii subsp. Calyptogena okutanii (strain HA).